Reading from the N-terminus, the 94-residue chain is Co-chaperonin GroES (94 aa).

This sequence belongs to the GroES chaperonin family. In terms of assembly, heptamer of 7 subunits arranged in a ring. Interacts with the chaperonin GroEL.

It localises to the cytoplasm. Its function is as follows. Together with the chaperonin GroEL, plays an essential role in assisting protein folding. The GroEL-GroES system forms a nano-cage that allows encapsulation of the non-native substrate proteins and provides a physical environment optimized to promote and accelerate protein folding. GroES binds to the apical surface of the GroEL ring, thereby capping the opening of the GroEL channel. The sequence is that of Co-chaperonin GroES from Lactobacillus acidophilus (strain ATCC 700396 / NCK56 / N2 / NCFM).